A 148-amino-acid polypeptide reads, in one-letter code: Thiol-disulfide oxidoreductase YkuV (148 aa).

The region spanning 2-145 is the Thioredoxin domain; sequence KLRQPMPELT…LEKRVNRVLA (144 aa). Cys41 and Cys44 form a disulfide bridge.

In terms of assembly, monomer.

The protein localises to the cytoplasm. Its function is as follows. Participates in various redox reactions through the reversible oxidation of its active center dithiol to a disulfide and catalyzes dithiol-disulfide exchange reactions. This Bacillus subtilis (strain 168) protein is Thiol-disulfide oxidoreductase YkuV (ykuV).